Here is an 812-residue protein sequence, read N- to C-terminus: DNA translocase FtsK 1 (812 aa).

Positions 1 to 11 are enriched in basic residues; sequence MTEKSHKKTAK. The disordered stretch occupies residues 1–36; it reads MTEKSHKKTAKGRAGSPSPTSARNKKADNGARGNKV. The segment covering 25 to 36 has biased composition (basic and acidic residues); the sequence is KKADNGARGNKV. 5 helical membrane-spanning segments follow: residues 63–83, 116–136, 156–176, 184–204, and 210–230; these read IGDA…ISLI, VGYY…CVVL, IAAA…YFVL, LPVG…AWLL, and LLII…ISWL. At 231 to 812 the chain is on the cytoplasmic side; the sequence is EFLNGAGRAV…RKILAHKDHL (582 aa). The region spanning 461 to 670 is the FtsK domain; it reads GTPVVGDLAK…FTVQSKIDSR (210 aa). 481-486 contacts ATP; sequence GSGKSV.

The protein belongs to the FtsK/SpoIIIE/SftA family. In terms of assembly, homohexamer. Forms a ring that surrounds DNA.

It is found in the cell inner membrane. Essential cell division protein that coordinates cell division and chromosome segregation. The N-terminus is involved in assembly of the cell-division machinery. The C-terminus functions as a DNA motor that moves dsDNA in an ATP-dependent manner towards the dif recombination site, which is located within the replication terminus region. Translocation stops specifically at Xer-dif sites, where FtsK interacts with the Xer recombinase, allowing activation of chromosome unlinking by recombination. FtsK orienting polar sequences (KOPS) guide the direction of DNA translocation. FtsK can remove proteins from DNA as it translocates, but translocation stops specifically at XerCD-dif site, thereby preventing removal of XerC and XerD from dif. This chain is DNA translocase FtsK 1 (ftsK1), found in Neisseria meningitidis serogroup B (strain ATCC BAA-335 / MC58).